The primary structure comprises 441 residues: POC1 centriolar protein homolog A (441 aa).

WD repeat units follow at residues 16-55 (GHRD…RAYR), 58-97 (GHKD…ESTV), 100-139 (AHTG…FLFS), 142-181 (QHIN…CIHS), 184-223 (EHGG…LIQH), 226-265 (VHSG…LLYT), and 268-307 (GHQG…ASYA). The tract at residues 323-380 (DYTSGVPAADRHRPERNAQTDQADDLEPRHIQMSAKDRSSPLSYTSRSIDQHHPQAED) is disordered. Basic and acidic residues-rich tracts occupy residues 331–340 (ADRHRPERNA), 348–361 (LEPR…KDRS), and 371–380 (IDQHHPQAED). A coiled-coil region spans residues 400–427 (LTRTVGILEQRLSLTEDKLKECIDNQQA).

The protein belongs to the WD repeat POC1 family. In terms of assembly, interacts with pat.

It is found in the cytoplasm. Its subcellular location is the cytoskeleton. May play an important role in centriole assembly and/or stability and ciliogenesis. This is POC1 centriolar protein homolog A (poc1a) from Xenopus tropicalis (Western clawed frog).